The chain runs to 430 residues: Putative golgin subfamily A member 8D (430 aa).

Residues 2–217 (EWKLEQSMRE…LTAQLSLMAL (216 aa)) adopt a coiled-coil conformation. Disordered stretches follow at residues 138–158 (LREQ…QEER), 217–239 (LPGE…RPMP), 290–331 (PITK…GVAA), and 382–406 (PVQG…QDHQ). The segment covering 222-235 (HGGEHLDSEGEEAP) has biased composition (basic and acidic residues). Residues 303–316 (PGGGHHQAGPGQGG) show a composition bias toward gly residues.

This sequence belongs to the GOLGA8 family.

This is Putative golgin subfamily A member 8D (GOLGA8DP) from Homo sapiens (Human).